A 365-amino-acid chain; its full sequence is MAKSSEIEHPVKAFGWAARDTTGLLSPFKFSRRATGEKDVRLKVLFCGVCHSDHHMIHNNWGFTTYPIVPGHEIVGVVTEVGSKVEKVKVGDNVGIGCLVGSCRSCESCCDNRESHCENTIDTYGSIYFDGTMTHGGYSDTMVADEHFILRWPKNLPLDSGAPLLCAGITTYSPLKYYGLDKPGTKIGVVGLGGLGHVAVKMAKAFGAQVTVIDISESKRKEALEKLGADSFLLNSDQEQMKGARSSLDGIIDTVPVNHPLAPLFDLLKPNGKLVMVGAPEKPFELPVFSLLKGRKLLGGTINGGIKETQEMLDFAAKHNITADVEVIPMDYVNTAMERLVKSDVRYRFVIDIANTMRTEESLGA.

Zn(2+)-binding residues include C50, H72, C103, C106, C109, C117, and C166.

It belongs to the zinc-containing alcohol dehydrogenase family. Zn(2+) serves as cofactor.

It localises to the cytoplasm. The enzyme catalyses D-mannitol + NAD(+) = D-mannose + NADH + H(+). In terms of biological role, oxidizes mannitol to mannose. Provides the initial step by which translocated mannitol is committed to central metabolism and, by regulating mannitol pool size, is important in regulating salt tolerance at the cellular level. This Apium graveolens (Celery) protein is Mannitol dehydrogenase (MTD).